A 303-amino-acid polypeptide reads, in one-letter code: Protoheme IX farnesyltransferase (303 aa).

8 helical membrane passes run 25–45 (MGLV…AIVL), 54–74 (IPQI…ACAL), 104–124 (LLIL…ILNI), 125–145 (PSGV…SIWS), 151–171 (WNTV…WTAI), 179–199 (AIAL…ALAI), 228–248 (VWLI…PVFI), and 280–300 (FVYS…ISLI).

It belongs to the UbiA prenyltransferase family. Protoheme IX farnesyltransferase subfamily. In terms of assembly, interacts with CtaA.

Its subcellular location is the cell membrane. It carries out the reaction heme b + (2E,6E)-farnesyl diphosphate + H2O = Fe(II)-heme o + diphosphate. It functions in the pathway porphyrin-containing compound metabolism; heme O biosynthesis; heme O from protoheme: step 1/1. In terms of biological role, converts heme B (protoheme IX) to heme O by substitution of the vinyl group on carbon 2 of heme B porphyrin ring with a hydroxyethyl farnesyl side group. This chain is Protoheme IX farnesyltransferase, found in Staphylococcus carnosus (strain TM300).